The primary structure comprises 280 residues: 2-dehydro-3-deoxyphosphooctonate aldolase (280 aa).

Belongs to the KdsA family.

The protein resides in the cytoplasm. The catalysed reaction is D-arabinose 5-phosphate + phosphoenolpyruvate + H2O = 3-deoxy-alpha-D-manno-2-octulosonate-8-phosphate + phosphate. It functions in the pathway carbohydrate biosynthesis; 3-deoxy-D-manno-octulosonate biosynthesis; 3-deoxy-D-manno-octulosonate from D-ribulose 5-phosphate: step 2/3. Its pathway is bacterial outer membrane biogenesis; lipopolysaccharide biosynthesis. The chain is 2-dehydro-3-deoxyphosphooctonate aldolase from Coxiella burnetii (strain Dugway 5J108-111).